A 943-amino-acid chain; its full sequence is U3 small nucleolar RNA-associated protein 12 (943 aa).

WD repeat units lie at residues 77–107, 119–149, 161–190, 202–230, 389–418, 428–458, 471–501, 571–601, 613–643, and 655–685; these read AKPA…KVWD, GHKA…IVWD, SHKD…KLWD, AHTG…KIWK, GQRT…KIWN, FECG…QLFD, AHDA…KFWD, GHKL…KIWG, AHQD…KYWD, and AHQS…RIWE. A disordered region spans residues 715-739; the sequence is EGNGDDAFKADASGEGVEDEASGVH.

This sequence belongs to the WD repeat WDR3/UTP12 family. In terms of assembly, interacts with snoRNA U3. Interacts with MPP10. Component of the ribosomal small subunit (SSU) processome composed of at least 40 protein subunits and snoRNA U3.

It localises to the nucleus. It is found in the nucleolus. Functionally, involved in nucleolar processing of pre-18S ribosomal RNA. The chain is U3 small nucleolar RNA-associated protein 12 (DIP2) from Saccharomyces cerevisiae (strain ATCC 204508 / S288c) (Baker's yeast).